A 97-amino-acid polypeptide reads, in one-letter code: Alpha-latrotoxin associated low molecular weight protein 2 (97 aa).

A signal peptide spans 1–19 (MFKLICIVFIATILSITSA). 3 disulfide bridges follow: cysteine 36–cysteine 72, cysteine 52–cysteine 68, and cysteine 55–cysteine 81.

Belongs to the arthropod CHH/MIH/GIH/VIH hormone family. Expressed by the venom gland.

It localises to the secreted. Its function is as follows. May increase the toxicity of alpha-latrotoxin and/or other venom components. Is non-toxic to mice and to the cockroach Periplaneta americana. The sequence is that of Alpha-latrotoxin associated low molecular weight protein 2 from Steatoda grossa (False black widow).